The primary structure comprises 232 residues: Protein TIFY 10c (232 aa).

The interval proline 54–leucine 73 is disordered. Residues alanine 114 to threonine 149 enclose the Tify domain. The disordered stretch occupies residues glycine 152 to proline 177. The span at asparagine 156–leucine 165 shows a compositional bias: polar residues. Positions proline 177–glutamine 202 match the Jas motif. The Nuclear localization signal signature appears at alanine 179–arginine 186.

It belongs to the TIFY/JAZ family. Interacts with BHLH148. Interacts with COI1B in a coronatine-dependent manner. Coronatine is an analog of jasmonoyl isoleucine (JA-Ile). Interacts with TIFY5/JAZ2, TIFY6B/JAZ4, TIFY9/JAZ5, TIFY11A, TIFY11D/JAZ12, TIFY11G/JAZ15 and NINJA1. Ubiquitinated. Increase in jasmonoyl isoleucine (JA-Ile) levels mediates its degradation via COI1B-mediated proteasome pathway.

The protein resides in the nucleus. It localises to the cytoplasm. Its subcellular location is the cytosol. Its function is as follows. Repressor of jasmonate (JA) responses. Acts as a repressor of JA-induced resistance to the bacterial blight pathogen Xanthomonas oryzae pv. oryzae (Xoo). Regulates JA-induced accumulation of linalool at the transcriptional level of linalool synthase gene LIS. Linalool is important for resistance to bacterial blight pathogen Xoo. The protein is Protein TIFY 10c of Oryza sativa subsp. japonica (Rice).